The chain runs to 592 residues: Syntaxin-binding protein 3 (592 aa).

The interval 1–255 is mediates interaction with DOC2B; that stretch reads MAPPVAERGL…STVLHELTFQ (255 aa).

The protein belongs to the STXBP/unc-18/SEC1 family. In terms of assembly, interacts with DOC2B; the interaction is direct, occurs at the cell membrane, excludes interaction with STX4 and regulates glucose-stimulated insulin secretion. Interacts with STX4. Phosphorylated by PKC in platelets in response to thrombin stimulation; phosphorylation inhibits binding to STX4. Megakaryocytes and platelets.

Its subcellular location is the cytoplasm. It localises to the cytosol. The protein resides in the cell membrane. Together with STX4 and VAMP2, may play a role in insulin-dependent movement of GLUT4 and in docking/fusion of intracellular GLUT4-containing vesicles with the cell surface in adipocytes. This is Syntaxin-binding protein 3 (STXBP3) from Homo sapiens (Human).